The sequence spans 105 residues: Ig lambda chain C region (105 aa).

The Ig-like domain occupies 2–100 (PKAAPTVNLF…EGTIVEKTVT (99 aa)). A disulfide bridge connects residues Cys27 and Cys86.

This chain is Ig lambda chain C region, found in Sus scrofa (Pig).